A 367-amino-acid polypeptide reads, in one-letter code: UDP-galactopyranose mutase (367 aa).

FAD is bound by residues Phe-12, 31–32, Asn-39, and 56–57; these read EK and HI. UDP-alpha-D-galactose is bound at residue Phe-12. UDP-alpha-D-galactose contacts are provided by Asn-80, Thr-152, Trp-156, and Tyr-181. 212 to 213 contacts FAD; it reads DF. The UDP-alpha-D-galactose site is built by Asn-268, Arg-278, and Tyr-311. Arg-340 contacts FAD. Position 346 (Tyr-346) interacts with UDP-alpha-D-galactose. FAD is bound at residue 347 to 352; the sequence is YDMHQV.

In terms of assembly, homodimer. Requires FAD as cofactor.

The enzyme catalyses UDP-alpha-D-galactose = UDP-alpha-D-galactofuranose. Its pathway is bacterial outer membrane biogenesis; lipopolysaccharide biosynthesis. In terms of biological role, catalyzes the interconversion through a 2-keto intermediate of uridine diphosphogalactopyranose (UDP-GalP) into uridine diphosphogalactofuranose (UDP-GalF). The protein is UDP-galactopyranose mutase (glf) of Escherichia coli (strain K12).